The following is a 418-amino-acid chain: 3-isopropylmalate dehydratase large subunit 1 (418 aa).

[4Fe-4S] cluster-binding residues include cysteine 298, cysteine 358, and cysteine 361.

The protein belongs to the aconitase/IPM isomerase family. LeuC type 2 subfamily. As to quaternary structure, heterodimer of LeuC and LeuD. [4Fe-4S] cluster serves as cofactor.

It catalyses the reaction (2R,3S)-3-isopropylmalate = (2S)-2-isopropylmalate. It functions in the pathway amino-acid biosynthesis; L-leucine biosynthesis; L-leucine from 3-methyl-2-oxobutanoate: step 2/4. Catalyzes the isomerization between 2-isopropylmalate and 3-isopropylmalate, via the formation of 2-isopropylmaleate. The polypeptide is 3-isopropylmalate dehydratase large subunit 1 (Thermotoga maritima (strain ATCC 43589 / DSM 3109 / JCM 10099 / NBRC 100826 / MSB8)).